A 182-amino-acid polypeptide reads, in one-letter code: Succinate dehydrogenase [ubiquinone] cytochrome b small subunit, mitochondrial (182 aa).

Over 1–71 (MSLSLLLRGA…SAPRMASAGS (71 aa)) the chain is Mitochondrial matrix. A helical transmembrane segment spans residues 72–96 (SHTLLWTVERIVSAGLLAVIPAAFI). Residues 97-101 (APSQV) are Mitochondrial intermembrane-facing. Residues 102 to 122 (LDALMAISVVIHTHWGVEAMV) form a helical membrane-spanning segment. Residue H113 participates in heme binding. Topologically, residues 123-135 (VDYMRPSVVGNVL) are mitochondrial matrix. Y125 serves as a coordination point for a ubiquinone. Residues 136–157 (PKVAHIALIIISVATLGGLFYF) form a helical membrane-spanning segment. At 158 to 182 (IQNDVGLANGIKRFWAIKGKDAEKA) the chain is on the mitochondrial intermembrane side.

This sequence belongs to the CybS family. Forms part of complex II containing four subunits: a flavoprotein (FP), an iron-sulfur protein (IP) and a cytochrome b composed of a large and a small subunit.

Its subcellular location is the mitochondrion inner membrane. It participates in carbohydrate metabolism; tricarboxylic acid cycle. Functionally, membrane-anchoring subunit of succinate dehydrogenase (SDH) that is involved in complex II of the mitochondrial electron transport chain and is responsible for transferring electrons from succinate to ubiquinone (coenzyme Q). The chain is Succinate dehydrogenase [ubiquinone] cytochrome b small subunit, mitochondrial from Drosophila melanogaster (Fruit fly).